The following is a 238-amino-acid chain: tRNA (guanine-N(1)-)-methyltransferase (238 aa).

Residue 132 to 137 (IGDYVL) coordinates S-adenosyl-L-methionine.

The protein belongs to the RNA methyltransferase TrmD family. In terms of assembly, homodimer.

It localises to the cytoplasm. The enzyme catalyses guanosine(37) in tRNA + S-adenosyl-L-methionine = N(1)-methylguanosine(37) in tRNA + S-adenosyl-L-homocysteine + H(+). Its function is as follows. Specifically methylates guanosine-37 in various tRNAs. The chain is tRNA (guanine-N(1)-)-methyltransferase from Nitrobacter hamburgensis (strain DSM 10229 / NCIMB 13809 / X14).